The following is a 359-amino-acid chain: Phospho-N-acetylmuramoyl-pentapeptide-transferase (359 aa).

A run of 10 helical transmembrane segments spans residues 27 to 47 (GAFFTALIFGFIFGQPLINAL), 70 to 90 (TPTMGGLLILAALSLATLLWA), 97 to 117 (VWLVLGVTWCFGLIGFADDWA), 133 to 153 (LAIGFVVAFGAALIAAWVHPE), 167 to 187 (VLLNMGWMYVPFVMIVIVGSA), 198 to 218 (GLAIMPVMIAAGTLGVIAYAV), 238 to 258 (LLIFTAGLIGGGLGFLWYNAP), 261 to 281 (AVFMGDTGSLALGGALGAIAV), 287 to 307 (IVLAIVGGLFVAEAVSVIVQV), and 336 to 356 (QVVIRFWIISLILALIGLATL).

The protein belongs to the glycosyltransferase 4 family. MraY subfamily. Mg(2+) is required as a cofactor.

The protein resides in the cell inner membrane. The catalysed reaction is UDP-N-acetyl-alpha-D-muramoyl-L-alanyl-gamma-D-glutamyl-meso-2,6-diaminopimeloyl-D-alanyl-D-alanine + di-trans,octa-cis-undecaprenyl phosphate = di-trans,octa-cis-undecaprenyl diphospho-N-acetyl-alpha-D-muramoyl-L-alanyl-D-glutamyl-meso-2,6-diaminopimeloyl-D-alanyl-D-alanine + UMP. Its pathway is cell wall biogenesis; peptidoglycan biosynthesis. Its function is as follows. Catalyzes the initial step of the lipid cycle reactions in the biosynthesis of the cell wall peptidoglycan: transfers peptidoglycan precursor phospho-MurNAc-pentapeptide from UDP-MurNAc-pentapeptide onto the lipid carrier undecaprenyl phosphate, yielding undecaprenyl-pyrophosphoryl-MurNAc-pentapeptide, known as lipid I. The sequence is that of Phospho-N-acetylmuramoyl-pentapeptide-transferase from Jannaschia sp. (strain CCS1).